Here is a 596-residue protein sequence, read N- to C-terminus: Cysteine--tRNA ligase (596 aa).

The segment at 1 to 199 (MKSKTFLEKN…SQRYFEELRK (199 aa)) is unknown. Zn(2+) is bound at residue C212. The 'HIGH' region motif lies at 214–224 (PTVYDEVHIGN). The Zn(2+) site is built by C377, H403, and E407. The short motif at 435–439 (KMSKS) is the 'KMSKS' region element. K438 contributes to the ATP binding site.

This sequence belongs to the class-I aminoacyl-tRNA synthetase family. As to quaternary structure, monomer. Requires Zn(2+) as cofactor.

It localises to the cytoplasm. The catalysed reaction is tRNA(Cys) + L-cysteine + ATP = L-cysteinyl-tRNA(Cys) + AMP + diphosphate. The polypeptide is Cysteine--tRNA ligase (cysS) (Mycoplasmopsis pulmonis (strain UAB CTIP) (Mycoplasma pulmonis)).